The following is a 360-amino-acid chain: Serine/threonine-protein kinase SRK2H (360 aa).

Residues 4 to 260 (YEVVKDLGAG…LKEIKKHPWY (257 aa)) form the Protein kinase domain. ATP contacts are provided by residues 10-18 (LGAGNFGVA) and Lys33. The Proton acceptor role is filled by Asp123. The tract at residues 298-360 (EARNPAPSSN…AHSCQEPPKA (63 aa)) is disordered. Residues 313–343 (DDDEEDVEDEVEEEEEEEEEEEEEEEEEEDE) show a composition bias toward acidic residues. Over residues 344–360 (YEKHVKEAHSCQEPPKA) the composition is skewed to basic and acidic residues.

It belongs to the protein kinase superfamily. Ser/Thr protein kinase family. In terms of tissue distribution, expressed in seedlings.

It carries out the reaction L-seryl-[protein] + ATP = O-phospho-L-seryl-[protein] + ADP + H(+). It catalyses the reaction L-threonyl-[protein] + ATP = O-phospho-L-threonyl-[protein] + ADP + H(+). This is Serine/threonine-protein kinase SRK2H (SRK2H) from Arabidopsis thaliana (Mouse-ear cress).